Here is a 567-residue protein sequence, read N- to C-terminus: Proline--tRNA ligase (567 aa).

Belongs to the class-II aminoacyl-tRNA synthetase family. ProS type 1 subfamily. Homodimer.

The protein resides in the cytoplasm. The catalysed reaction is tRNA(Pro) + L-proline + ATP = L-prolyl-tRNA(Pro) + AMP + diphosphate. Its function is as follows. Catalyzes the attachment of proline to tRNA(Pro) in a two-step reaction: proline is first activated by ATP to form Pro-AMP and then transferred to the acceptor end of tRNA(Pro). As ProRS can inadvertently accommodate and process non-cognate amino acids such as alanine and cysteine, to avoid such errors it has two additional distinct editing activities against alanine. One activity is designated as 'pretransfer' editing and involves the tRNA(Pro)-independent hydrolysis of activated Ala-AMP. The other activity is designated 'posttransfer' editing and involves deacylation of mischarged Ala-tRNA(Pro). The misacylated Cys-tRNA(Pro) is not edited by ProRS. The polypeptide is Proline--tRNA ligase (Geobacillus kaustophilus (strain HTA426)).